We begin with the raw amino-acid sequence, 196 residues long: MQLKRVAEAKLPTPLGDFLMVGFEELATGHDHAALVFGDISGKTPVLARVHSECLTGDALFSLRCDCGFQLEAALTHIAEEGRGILIYHRQEGRNIGLLNKIRAYALQDQGYDTVEANHQLGFAADERDFTLCADMFKLLGVDEVRLLTNNPKKVEILTEAGINIVERVPLIVGRNPNNEHYLDTKAAKMGHLLSK.

49 to 53 (RVHSE) lines the GTP pocket. Positions 54, 65, and 67 each coordinate Zn(2+). Residues Gln70, 92–94 (EGR), and Thr114 each bind GTP. Residue Asp126 is the Proton acceptor of the active site. Arg128 (nucleophile) is an active-site residue. 2 residues coordinate GTP: Thr149 and Lys154.

It belongs to the GTP cyclohydrolase II family. Homodimer. Requires Zn(2+) as cofactor.

The catalysed reaction is GTP + 4 H2O = 2,5-diamino-6-hydroxy-4-(5-phosphoribosylamino)-pyrimidine + formate + 2 phosphate + 3 H(+). It functions in the pathway cofactor biosynthesis; riboflavin biosynthesis; 5-amino-6-(D-ribitylamino)uracil from GTP: step 1/4. Its function is as follows. Catalyzes the conversion of GTP to 2,5-diamino-6-ribosylamino-4(3H)-pyrimidinone 5'-phosphate (DARP), formate and pyrophosphate. In Salmonella choleraesuis (strain SC-B67), this protein is GTP cyclohydrolase-2.